Consider the following 355-residue polypeptide: Protein RecA (355 aa).

67–74 provides a ligand contact to ATP; that stretch reads GPESSGKT.

This sequence belongs to the RecA family.

It localises to the cytoplasm. Its function is as follows. Can catalyze the hydrolysis of ATP in the presence of single-stranded DNA, the ATP-dependent uptake of single-stranded DNA by duplex DNA, and the ATP-dependent hybridization of homologous single-stranded DNAs. It interacts with LexA causing its activation and leading to its autocatalytic cleavage. This is Protein RecA from Shewanella baltica (strain OS195).